Consider the following 654-residue polypeptide: Pentatricopeptide repeat-containing protein At3g16610 (654 aa).

PPR repeat units lie at residues 1–32 (MFLSLLETCIRSRNLVLGQVIHQHLLKRSLTL), 34–64 (SSTVLVNLTRLYASCNEVELARHVFDEIPHP), 67–101 (NPIAWDLMIRAYASNDFAEKALDLYYKMLNSGVRP), 102–136 (TKYTYPFVLKACAGLRAIDDGKLIHSHVNCSDFAT), 137–171 (DMYVCTALVDFYAKCGELEMAIKVFDEMPKRDMVA), 172–203 (WNAMISGFSLHCCLTDVIGLFLDMRRIDGLSP), 204–238 (NLSTIVGMFPALGRAGALREGKAVHGYCTRMGFSN), 239–269 (DLVVKTGILDVYAKSKCIIYARRVFDLDFKK), 270–304 (NEVTWSAMIGGYVENEMIKEAGEVFFQMLVNDNVA), 307–341 (TPVAIGLILMGCARFGDLSGGRCVHCYAVKAGFIL), 342–372 (DLTVQNTIISFYAKYGSLCDAFRQFSEIGLK), 373–407 (DVISYNSLITGCVVNCRPEESFRLFHEMRTSGIRP), 408–442 (DITTLLGVLTACSHLAALGHGSSCHGYCVVHGYAV), 443–473 (NTSICNALMDMYTKCGKLDVAKRVFDTMHKR), 474–508 (DIVSWNTMLFGFGIHGLGKEALSLFNSMQETGVNP), 509–543 (DEVTLLAILSACSHSGLVDEGKQLFNSMSRGDFNV), and 546–576 (RIDHYNCMTDLLARAGYLDEAYDFVNKMPFE). The segment at 581–654 (VLGTLLSACW…KTPGYSWVDV (74 aa)) is type E motif; degenerate.

This sequence belongs to the PPR family. PCMP-E subfamily.

The polypeptide is Pentatricopeptide repeat-containing protein At3g16610 (PCMP-E91) (Arabidopsis thaliana (Mouse-ear cress)).